The primary structure comprises 622 residues: Putative E3 ubiquitin-protein ligase ORTHRUS 4 (622 aa).

A PHD-type zinc finger spans residues 12–62; that stretch reads DGVCMRCQVTPPSEETLTCGTCVTPWHVSCLLPESLASSTGDWECPDCSGV. An RING-type 1 zinc finger spans residues 129–169; the sequence is CSICIQLPERPVTTPCGHNFCLKCFEKWAVGQGKLTCMICR. The 150-residue stretch at 258-407 folds into the YDG domain; sequence TRNQGVLVGE…HKMCRYLFVR (150 aa). Residues 498–555 form an RING-type 2 zinc finger; that stretch reads CQICRKVLSLPVTTPCAHNFCKACLEAKFAGITQLRDRSNGVRKLRAKKNIMTCPCCT. Residues 566–602 adopt a coiled-coil conformation; the sequence is QVNREMMEIIENFKKSEEEAEVAESSNISEEEEEESE. Positions 579 to 622 are disordered; the sequence is KKSEEEAEVAESSNISEEEEEESEPPTKKIKMDNNSVGDTSLSA. The segment covering 611-622 has biased composition (polar residues); it reads DNNSVGDTSLSA.

It is found in the nucleus. It carries out the reaction S-ubiquitinyl-[E2 ubiquitin-conjugating enzyme]-L-cysteine + [acceptor protein]-L-lysine = [E2 ubiquitin-conjugating enzyme]-L-cysteine + N(6)-ubiquitinyl-[acceptor protein]-L-lysine.. Its pathway is protein modification; protein ubiquitination. Functionally, E3 ubiquitin-protein ligase. May participate in CpG methylation-dependent transcriptional regulation. This chain is Putative E3 ubiquitin-protein ligase ORTHRUS 4 (ORTH4), found in Arabidopsis thaliana (Mouse-ear cress).